The following is a 236-amino-acid chain: Purine nucleoside phosphorylase DeoD-type 2 (236 aa).

H5 contributes to the a purine D-ribonucleoside binding site. Phosphate contacts are provided by residues G21, R25, R44, and 88 to 91 (RVGS). A purine D-ribonucleoside-binding positions include 180-182 (DME) and 204-205 (SD). The Proton donor role is filled by D205.

It belongs to the PNP/UDP phosphorylase family. In terms of assembly, homohexamer; trimer of homodimers.

The catalysed reaction is a purine D-ribonucleoside + phosphate = a purine nucleobase + alpha-D-ribose 1-phosphate. It catalyses the reaction a purine 2'-deoxy-D-ribonucleoside + phosphate = a purine nucleobase + 2-deoxy-alpha-D-ribose 1-phosphate. In terms of biological role, catalyzes the reversible phosphorolytic breakdown of the N-glycosidic bond in the beta-(deoxy)ribonucleoside molecules, with the formation of the corresponding free purine bases and pentose-1-phosphate. The chain is Purine nucleoside phosphorylase DeoD-type 2 from Aliivibrio fischeri (strain ATCC 700601 / ES114) (Vibrio fischeri).